Here is a 751-residue protein sequence, read N- to C-terminus: Nibrin (751 aa).

Positions 24-83 (YVVGRKNCGILIENDQSISRNHAVLTVNFPVTSLSQTDEIPTLTIKDNSKYGTFVNEEKM) constitute an FHA domain. BRCT domains lie at 105-181 (KFRV…SEFL) and 224-315 (GKTF…LAVI). The mediates interaction with SP100 stretch occupies residues 111 to 328 (EPLVVCSSCL…TENYCNPQGQ (218 aa)). The tract at residues 221 to 403 (IFKGKTFVFL…SRKLSQETFN (183 aa)) is interaction with MTOR, MAPKAP1 and RICTOR. Thr337 bears the Phosphothreonine mark. The residue at position 343 (Ser343) is a Phosphoserine; by ATM. 2 positions are modified to phosphoserine: Ser347 and Ser398. Residues 389-418 (GLEQSSRKLSQETFNIKEAPKPSSKANNVA) form a disordered region. Ser433 bears the Phosphoserine; by CDK2 mark. Residue Lys436 forms a Glycyl lysine isopeptide (Lys-Gly) (interchain with G-Cter in ubiquitin) linkage. 2 disordered regions span residues 444 to 479 (KDWTSQQQQNSIKNYFQPCTRKRERDEDNPELSSCK) and 491 to 550 (EQTQ…RKRK). Polar residues predominate over residues 446–457 (WTSQQQQNSIKN). A Nuclear localization signal motif is present at residues 461–467 (PCTRKRE). Basic and acidic residues-rich tracts occupy residues 502–518 (KSKEHQSQNATLDREAD) and 528–539 (ELNRKSPDRKPL). Residue Ser508 is modified to Phosphoserine. Glycyl lysine isopeptide (Lys-Gly) (interchain with G-Cter in SUMO2) cross-links involve residues Lys569 and Lys580. Positions 576 to 645 (VKVEKQEADD…ANSDGLQDSS (70 aa)) are disordered. 2 stretches are compositionally biased toward basic and acidic residues: residues 577 to 599 (KVEKQEADDTIRKKPRMDAERNR) and 615 to 636 (EDEREKKDELQTESWSTKHEIA). Glycyl lysine isopeptide (Lys-Gly) (interchain with G-Cter in ubiquitin) cross-links involve residues Lys684, Lys688, and Lys733. Residues 731 to 742 (QAKEESLADDLF) are compositionally biased toward basic and acidic residues. Residues 731 to 751 (QAKEESLADDLFRYNPNVKRR) form a disordered region. The FxF/Y motif motif lies at 738 to 747 (ADDLFRYNPN).

Belongs to the Nibrin family. In terms of assembly, component of the MRN complex composed of two heterodimers RAD50 and MRE11 associated with a single NBN. The MRN complexes dimerize on DNA to form joined MRN-MRN oligomers required for DNA double-strand break repair. As part of the MRN complex, interacts with MCM9; the interaction recruits the complex to DNA repair sites. Component of the BASC complex, at least composed of BRCA1, MSH2, MSH6, MLH1, ATM, BLM, RAD50, MRE11 and NBN. Interacts with histone H2AX; this requires phosphorylation of H2AX on 'Ser-139' and promotes NBN recruitment to DNA damage sites. Interacts with (phosphorylated) MDC1; promoting NBN recruitment to DNA damage sites. Interacts with (phosphorylated) RAD17; promoting NBN recruitment to DNA damage sites. Interacts (via FxF/Y motif) with ATM. Interacts with HJURP. Interacts with INTS3. Interacts with KPNA2. Interacts with TERF2; interaction is disrupted upon NBN phosphorylation by CDK2. Interacts with (phosphorylated) RBBP8/CtIP; the interaction links the role of the MRN complex in DNA double-strand break sensing to resection. Interacts with SP100; recruits NBN to PML bodies. Interacts with ATF2. Interacts with MTOR, MAPKAP1 isoform 2 and RICTOR; indicative for an association with the mTORC2 complex. Interacts with MRNIP. Interacts with UFL1; promoting UFL1 recruitment to double-strand breaks following DNA damage. Interacts with CYREN (via XLF motif). Post-translationally, ubiquitinated at Lys-436 via 'Lys-6'-linked ubiquitin chains by RNF8, promoting NBN recruitment to DNA double-strand breaks (DSBs). Ubiquitinated at Lys-684 and Lys-688 via 'Lys-63'-linked ubiquitin chains by PELI1: ubiquitination takes place following PELI1 phosphorylation and promotes ATM activation and DNA repair. Ubiquitinated at Lys-733 via 'Lys-63'-linked ubiquitin chains by the SCF(SKP2) complex: ubiquitination takes place following SKP2 phosphorylation and promotes ATM activation and DNA repair. Phosphorylated by ATM in response of ionizing radiation, and such phosphorylation is responsible intra-S phase checkpoint control and telomere maintenance. Phosphorylated at Ser-433 by CDK2 in S/G2 phases abolishes interaction with TERF2, enabling DCLRE1B/Apollo recruitment to telomeres. Phosphorylation at Ser-433 in response to dysfunctional telomeres promotes non-homologous end joining repair at telomeres, while dephosphorylation by PPP1CA promotes microhomology-mediated end-joining (MMEJ) repair. In terms of tissue distribution, high expression in the liver, heart and testis. Low expression in all other tissues analyzed. In the cerebellum the postmitotic Purkinje cells are marked specifically.

Its subcellular location is the nucleus. It is found in the chromosome. The protein localises to the PML body. It localises to the telomere. Component of the MRN complex, which plays a central role in double-strand break (DSB) repair, DNA recombination, maintenance of telomere integrity and meiosis. The MRN complex is involved in the repair of DNA double-strand breaks (DSBs) via homologous recombination (HR), an error-free mechanism which primarily occurs during S and G2 phases. The complex (1) mediates the end resection of damaged DNA, which generates proper single-stranded DNA, a key initial steps in HR, and is (2) required for the recruitment of other repair factors and efficient activation of ATM and ATR upon DNA damage. The MRN complex possesses single-strand endonuclease activity and double-strand-specific 3'-5' exonuclease activity, which are provided by MRE11, to initiate end resection, which is required for single-strand invasion and recombination. Within the MRN complex, NBN acts as a protein-protein adapter, which specifically recognizes and binds phosphorylated proteins, promoting their recruitment to DNA damage sites. Recruits MRE11 and RAD50 components of the MRN complex to DSBs in response to DNA damage. Promotes the recruitment of PI3/PI4-kinase family members ATM, ATR, and probably DNA-PKcs to the DNA damage sites, activating their functions. Mediates the recruitment of phosphorylated RBBP8/CtIP to DSBs, leading to cooperation between the MRN complex and RBBP8/CtIP to initiate end resection. RBBP8/CtIP specifically promotes the endonuclease activity of the MRN complex to clear DNA ends containing protein adducts. The MRN complex is also required for the processing of R-loops. NBN also functions in telomere length maintenance via its interaction with TERF2: interaction with TERF2 during G1 phase preventing recruitment of DCLRE1B/Apollo to telomeres. NBN also promotes DNA repair choice at dysfunctional telomeres: NBN phosphorylation by CDK2 promotes non-homologous end joining repair at telomeres, while unphosphorylated NBN promotes microhomology-mediated end-joining (MMEJ) repair. Enhances AKT1 phosphorylation possibly by association with the mTORC2 complex. The chain is Nibrin from Mus musculus (Mouse).